The primary structure comprises 452 residues: Bone morphogenetic protein 5 (452 aa).

The first 25 residues, 1–25, serve as a signal peptide directing secretion; that stretch reads MHWTVFLLRGIVGFLWSGWVQVGYA. A propeptide spanning residues 26 to 314 is cleaved from the precursor; the sequence is KGGLGDNHVH…ASEVLLRSVR (289 aa). Residues asparagine 209, asparagine 325, asparagine 343, and asparagine 393 are each glycosylated (N-linked (GlcNAc...) asparagine). The interval 316–345 is disordered; it reads ASKRKNQNRNKSNSHQDPSRMPSAGDYNTS. Disulfide bonds link cysteine 351/cysteine 417, cysteine 380/cysteine 449, and cysteine 384/cysteine 451.

Belongs to the TGF-beta family. Interacts with ERFE; the interaction inhibits BMP-induced transcription of HAMP.

The protein localises to the secreted. In terms of biological role, growth factor of the TGF-beta superfamily that plays essential roles in many developmental processes, including cartilage and bone formation or neurogenesis. Initiates the canonical BMP signaling cascade by associating with type I receptor BMPR1A and type II receptor BMPR2. In turn, BMPR1A propagates signal by phosphorylating SMAD1/5/8 that travel to the nucleus and act as activators and repressors of transcription of target genes. Can also signal through non-canonical pathway such as MAPK p38 signaling cascade to promote chondrogenic differentiation. Promotes the expression of HAMP, this is repressed by its interaction with ERFE. The chain is Bone morphogenetic protein 5 (Bmp5) from Mus musculus (Mouse).